The following is a 199-amino-acid chain: NAD(P)H dehydrogenase (quinone) (199 aa).

The region spanning 4 to 190 (VLVLYYSMYG…AIARFQGKHV (187 aa)) is the Flavodoxin-like domain. Residues 10-15 (SMYGHI) and 79-81 (TRF) each bind FMN. Tyr12 contacts NAD(+). A substrate-binding site is contributed by Trp99. FMN contacts are provided by residues 114–119 (STGTGG) and His134.

The protein belongs to the WrbA family. FMN is required as a cofactor.

It carries out the reaction a quinone + NADH + H(+) = a quinol + NAD(+). The enzyme catalyses a quinone + NADPH + H(+) = a quinol + NADP(+). In Marinobacter nauticus (strain ATCC 700491 / DSM 11845 / VT8) (Marinobacter aquaeolei), this protein is NAD(P)H dehydrogenase (quinone).